The following is a 223-amino-acid chain: Ribose-5-phosphate isomerase A (223 aa).

Residues 26–29 (TGST), 82–85 (DGAD), and 95–98 (KGGG) contribute to the substrate site. Residue E104 is the Proton acceptor of the active site. K122 lines the substrate pocket.

It belongs to the ribose 5-phosphate isomerase family. In terms of assembly, homodimer.

The enzyme catalyses aldehydo-D-ribose 5-phosphate = D-ribulose 5-phosphate. It participates in carbohydrate degradation; pentose phosphate pathway; D-ribose 5-phosphate from D-ribulose 5-phosphate (non-oxidative stage): step 1/1. In terms of biological role, catalyzes the reversible conversion of ribose-5-phosphate to ribulose 5-phosphate. The sequence is that of Ribose-5-phosphate isomerase A from Streptococcus agalactiae serotype III (strain NEM316).